The chain runs to 415 residues: Tyrosine--tRNA ligase (415 aa).

Residue Tyr-34 coordinates L-tyrosine. The 'HIGH' region motif lies at 39 to 48; that stretch reads PSADSLHLGN. Tyr-162 and Gln-166 together coordinate L-tyrosine. A 'KMSKS' region motif is present at residues 224-228; it reads KFGKS. Lys-227 provides a ligand contact to ATP. In terms of domain architecture, S4 RNA-binding spans 346–413; the sequence is IKIIDLLNLA…KRNYFLIVWN (68 aa).

Belongs to the class-I aminoacyl-tRNA synthetase family. TyrS type 1 subfamily. Homodimer.

It is found in the cytoplasm. The enzyme catalyses tRNA(Tyr) + L-tyrosine + ATP = L-tyrosyl-tRNA(Tyr) + AMP + diphosphate + H(+). Catalyzes the attachment of tyrosine to tRNA(Tyr) in a two-step reaction: tyrosine is first activated by ATP to form Tyr-AMP and then transferred to the acceptor end of tRNA(Tyr). In Ureaplasma urealyticum serovar 10 (strain ATCC 33699 / Western), this protein is Tyrosine--tRNA ligase.